Here is a 236-residue protein sequence, read N- to C-terminus: 2-C-methyl-D-erythritol 4-phosphate cytidylyltransferase (236 aa).

This sequence belongs to the IspD/TarI cytidylyltransferase family. IspD subfamily. Homodimer.

The enzyme catalyses 2-C-methyl-D-erythritol 4-phosphate + CTP + H(+) = 4-CDP-2-C-methyl-D-erythritol + diphosphate. Its pathway is isoprenoid biosynthesis; isopentenyl diphosphate biosynthesis via DXP pathway; isopentenyl diphosphate from 1-deoxy-D-xylulose 5-phosphate: step 2/6. Catalyzes the formation of 4-diphosphocytidyl-2-C-methyl-D-erythritol from CTP and 2-C-methyl-D-erythritol 4-phosphate (MEP). The chain is 2-C-methyl-D-erythritol 4-phosphate cytidylyltransferase from Salmonella agona (strain SL483).